A 399-amino-acid polypeptide reads, in one-letter code: Carbamoyl phosphate synthase small chain (399 aa).

Positions 1-206 are CPSase; sequence MTQTIPSPKP…NKGYKTNNDA (206 aa). Residues S60, G258, and G260 each coordinate L-glutamine. One can recognise a Glutamine amidotransferase type-1 domain in the interval 210–398; that stretch reads HIVAIDYGIK…FNLIMDYKKT (189 aa). C287 (nucleophile) is an active-site residue. L288, Q291, N329, G331, and F332 together coordinate L-glutamine. Active-site residues include H371 and E373.

Belongs to the CarA family. Composed of two chains; the small (or glutamine) chain promotes the hydrolysis of glutamine to ammonia, which is used by the large (or ammonia) chain to synthesize carbamoyl phosphate. Tetramer of heterodimers (alpha,beta)4.

It carries out the reaction hydrogencarbonate + L-glutamine + 2 ATP + H2O = carbamoyl phosphate + L-glutamate + 2 ADP + phosphate + 2 H(+). The catalysed reaction is L-glutamine + H2O = L-glutamate + NH4(+). It functions in the pathway amino-acid biosynthesis; L-arginine biosynthesis; carbamoyl phosphate from bicarbonate: step 1/1. It participates in pyrimidine metabolism; UMP biosynthesis via de novo pathway; (S)-dihydroorotate from bicarbonate: step 1/3. Functionally, small subunit of the glutamine-dependent carbamoyl phosphate synthetase (CPSase). CPSase catalyzes the formation of carbamoyl phosphate from the ammonia moiety of glutamine, carbonate, and phosphate donated by ATP, constituting the first step of 2 biosynthetic pathways, one leading to arginine and/or urea and the other to pyrimidine nucleotides. The small subunit (glutamine amidotransferase) binds and cleaves glutamine to supply the large subunit with the substrate ammonia. The protein is Carbamoyl phosphate synthase small chain of Bartonella henselae (strain ATCC 49882 / DSM 28221 / CCUG 30454 / Houston 1) (Rochalimaea henselae).